The chain runs to 498 residues: GTPase Der (498 aa).

EngA-type G domains follow at residues 3–167 (PVVA…FDDL) and 210–383 (IKLA…KSAT). GTP is bound by residues 9-16 (GRPNVGKS), 57-61 (DTGGI), 119-122 (NKID), 216-223 (GRPNVGKS), 263-267 (DTAGV), and 328-331 (NKWD). The KH-like domain maps to 384 to 468 (TRVGTSVLTR…PIRINFQNSE (85 aa)).

This sequence belongs to the TRAFAC class TrmE-Era-EngA-EngB-Septin-like GTPase superfamily. EngA (Der) GTPase family. Associates with the 50S ribosomal subunit.

GTPase that plays an essential role in the late steps of ribosome biogenesis. This chain is GTPase Der, found in Vibrio parahaemolyticus serotype O3:K6 (strain RIMD 2210633).